A 324-amino-acid chain; its full sequence is Formimidoylglutamase (324 aa).

Residues histidine 124, aspartate 153, histidine 155, aspartate 157, aspartate 245, and aspartate 247 each contribute to the Mn(2+) site.

Belongs to the arginase family. The cofactor is Mn(2+).

It carries out the reaction N-formimidoyl-L-glutamate + H2O = formamide + L-glutamate. It participates in amino-acid degradation; L-histidine degradation into L-glutamate; L-glutamate from N-formimidoyl-L-glutamate (hydrolase route): step 1/1. Its function is as follows. Catalyzes the conversion of N-formimidoyl-L-glutamate to L-glutamate and formamide. This is Formimidoylglutamase from Hahella chejuensis (strain KCTC 2396).